Reading from the N-terminus, the 45-residue chain is Major cold shock protein (45 aa).

Residues 1–45 form the CSD domain; sequence EKGFGFISTENGQDVFAHFSAIQTNGFKTLEEGQKVAFDVEEGQR.

As to quaternary structure, homodimer.

The protein localises to the cytoplasm. This is Major cold shock protein (cspA) from Streptococcus pyogenes.